We begin with the raw amino-acid sequence, 219 residues long: Mediator of RNA polymerase II transcription subunit 18 (219 aa).

It belongs to the Mediator complex subunit 18 family. In terms of assembly, component of the Mediator complex. Interacts with YY1 to suppress disease susceptibility via the repression of genes glutaredoxins GRX480, GRXS13 and thioredoxin TRX-h5. Binds to ABI4 to regulate abscisic acid responses; recruited by ABI4 to ABI5 promoter in the presence of abscisic acid (ABA). Interacts with SUF4 to regulate flowering time; recruited by SUF4 to FLC promoter.

Its subcellular location is the nucleus. Component of the Mediator complex, a coactivator involved in the regulated transcription of nearly all RNA polymerase II-dependent genes. Mediator functions as a bridge to convey information from gene-specific regulatory proteins to the basal RNA polymerase II transcription machinery. The Mediator complex, having a compact conformation in its free form, is recruited to promoters by direct interactions with regulatory proteins and serves for the assembly of a functional pre-initiation complex with RNA polymerase II and the general transcription factors. Involved in the regulation of histone H3 lysine tri-methylation (H3K36me3). Associates with the promoter, coding and terminator regions of target genes suggesting its function in transcription initiation, elongation and termination. Multifunctional protein which regulates plant immunity, especially during necrotrophic fungal infection (e.g. B.cinerea and A.brassicicola), flowering time and responses to hormones (e.g. abscisic acid ABA and ethylene) through interactions with distinct transcription factors. The protein is Mediator of RNA polymerase II transcription subunit 18 of Arabidopsis thaliana (Mouse-ear cress).